The following is a 119-amino-acid chain: MPRVKGGPVTRRRRKKVLKLAKGYFGAKHALYRVANQQVMKSLMYAYRDRRQRKRDFRKLWIVRINAAARQNGLSYSRLMHGLKLAGVEVNRKMLADLAVNDQAAFAQLADLAKANLNK.

It belongs to the bacterial ribosomal protein bL20 family.

Its function is as follows. Binds directly to 23S ribosomal RNA and is necessary for the in vitro assembly process of the 50S ribosomal subunit. It is not involved in the protein synthesizing functions of that subunit. The sequence is that of Large ribosomal subunit protein bL20 from Geobacillus kaustophilus (strain HTA426).